We begin with the raw amino-acid sequence, 320 residues long: SUMO-activating enzyme subunit 1B-1 (320 aa).

N-acetylmethionine is present on Met-1.

This sequence belongs to the ubiquitin-activating E1 family. Heterodimer of SAE1A or SAE1B and SAE2. The complex binds SUMO proteins via SAE2.

The protein resides in the nucleus. It functions in the pathway protein modification; protein sumoylation. Functionally, the dimeric enzyme acts as an E1 ligase for SUMO1 and SUMO2. It mediates ATP-dependent activation of SUMO proteins and formation of a thioester with a conserved cysteine residue on SAE2. Functionally redundant with its paralog SAE1A. In Arabidopsis thaliana (Mouse-ear cress), this protein is SUMO-activating enzyme subunit 1B-1 (SAE1B-1).